The sequence spans 384 residues: Histidinol-phosphate aminotransferase 2 (384 aa).

The residue at position 236 (Lys-236) is an N6-(pyridoxal phosphate)lysine.

This sequence belongs to the class-II pyridoxal-phosphate-dependent aminotransferase family. Histidinol-phosphate aminotransferase subfamily. In terms of assembly, homodimer. Pyridoxal 5'-phosphate is required as a cofactor.

The catalysed reaction is L-histidinol phosphate + 2-oxoglutarate = 3-(imidazol-4-yl)-2-oxopropyl phosphate + L-glutamate. It functions in the pathway amino-acid biosynthesis; L-histidine biosynthesis; L-histidine from 5-phospho-alpha-D-ribose 1-diphosphate: step 7/9. This is Histidinol-phosphate aminotransferase 2 (hisC2) from Nostoc sp. (strain PCC 7120 / SAG 25.82 / UTEX 2576).